The sequence spans 614 residues: Aspartate--tRNA ligase (614 aa).

An L-aspartate-binding site is contributed by Glu-174. Residues 198 to 201 (QLFK) are aspartate. Residue Arg-220 coordinates L-aspartate. ATP is bound by residues 220-222 (RDE) and Gln-229. An L-aspartate-binding site is contributed by His-448. Glu-482 is a binding site for ATP. Arg-489 contributes to the L-aspartate binding site. 534–537 (GLDR) serves as a coordination point for ATP. Positions 587–614 (YEDSVKETEQRLEKEAQEDADKNSTWDE) are disordered.

The protein belongs to the class-II aminoacyl-tRNA synthetase family. Type 1 subfamily. Homodimer.

It localises to the cytoplasm. The catalysed reaction is tRNA(Asp) + L-aspartate + ATP = L-aspartyl-tRNA(Asp) + AMP + diphosphate. In terms of biological role, catalyzes the attachment of L-aspartate to tRNA(Asp) in a two-step reaction: L-aspartate is first activated by ATP to form Asp-AMP and then transferred to the acceptor end of tRNA(Asp). The chain is Aspartate--tRNA ligase from Lactobacillus johnsonii (strain CNCM I-12250 / La1 / NCC 533).